Reading from the N-terminus, the 308-residue chain is Phenylcoumaran benzylic ether reductase TP7 (308 aa).

NADP(+) is bound by residues 11 to 17 (GGTGYIG), R36, and K45. The active-site Proton acceptor is K133. Residue R137 coordinates NADP(+).

Belongs to the NmrA-type oxidoreductase family. Isoflavone reductase subfamily. Expressed in flowers. Expressed at low levels in stems.

It carries out the reaction (-)-dehydrodiconiferyl alcohol + NADPH + H(+) = (S)-isodihydrodehydrodiconiferyl alcohol + NADP(+). The catalysed reaction is (+)-dehydrodiconiferyl alcohol + NADPH + H(+) = (R)-isodihydrodehydrodiconiferyl alcohol + NADP(+). It catalyses the reaction (2R,3S)-dihydrodehydrodiconiferyl alcohol + NADPH + H(+) = (S)-tetrahydrodehydrodiconiferyl alcohol + NADP(+). The enzyme catalyses (2S,3R)-dihydrodehydrodiconiferyl alcohol + NADPH + H(+) = (R)-tetrahydrodehydrodiconiferyl alcohol + NADP(+). In terms of biological role, oxidoreductase involved in lignan biosynthesis. Catalyzes the NADPH-dependent reduction of phenylcoumaran benzylic ethers. Converts dehydrodiconiferyl alcohol (DDC) to isodihydrodehydrodiconiferyl alcohol (IDDDC), and dihydrodehydrodiconiferyl alcohol (DDDC) to tetrahydrodehydrodiconiferyl alcohol (TDDC). This chain is Phenylcoumaran benzylic ether reductase TP7, found in Nicotiana tabacum (Common tobacco).